Reading from the N-terminus, the 251-residue chain is Coproheme decarboxylase (251 aa).

Residues Arg-133, 147–151 (YPMSK), His-174, Gln-187, and Ser-225 contribute to the Fe-coproporphyrin III site. Tyr-147 is an active-site residue.

Belongs to the ChdC family. Type 1 subfamily. Fe-coproporphyrin III is required as a cofactor.

It catalyses the reaction Fe-coproporphyrin III + 2 H2O2 + 2 H(+) = heme b + 2 CO2 + 4 H2O. The catalysed reaction is Fe-coproporphyrin III + H2O2 + H(+) = harderoheme III + CO2 + 2 H2O. It carries out the reaction harderoheme III + H2O2 + H(+) = heme b + CO2 + 2 H2O. The protein operates within porphyrin-containing compound metabolism; protoheme biosynthesis. Its function is as follows. Involved in coproporphyrin-dependent heme b biosynthesis. Catalyzes the decarboxylation of Fe-coproporphyrin III (coproheme) to heme b (protoheme IX), the last step of the pathway. The reaction occurs in a stepwise manner with a three-propionate intermediate. The protein is Coproheme decarboxylase of Listeria welshimeri serovar 6b (strain ATCC 35897 / DSM 20650 / CCUG 15529 / CIP 8149 / NCTC 11857 / SLCC 5334 / V8).